The primary structure comprises 85 residues: Large ribosomal subunit protein bL27 (85 aa).

The tract at residues 1-27 (MAHKKAGGSTKNGRDSQSKRLGVKRYG) is disordered.

This sequence belongs to the bacterial ribosomal protein bL27 family.

The chain is Large ribosomal subunit protein bL27 from Halorhodospira halophila (strain DSM 244 / SL1) (Ectothiorhodospira halophila (strain DSM 244 / SL1)).